The primary structure comprises 215 residues: 3,4-dihydroxy-2-butanone 4-phosphate synthase (215 aa).

D-ribulose 5-phosphate contacts are provided by residues 37 to 38 (RE), Asp42, 150 to 154 (RPGHT), and Glu174. A Mg(2+)-binding site is contributed by Glu38. His153 contacts Mg(2+).

The protein belongs to the DHBP synthase family. Homodimer. Requires Mg(2+) as cofactor. It depends on Mn(2+) as a cofactor.

It carries out the reaction D-ribulose 5-phosphate = (2S)-2-hydroxy-3-oxobutyl phosphate + formate + H(+). Its pathway is cofactor biosynthesis; riboflavin biosynthesis; 2-hydroxy-3-oxobutyl phosphate from D-ribulose 5-phosphate: step 1/1. Functionally, catalyzes the conversion of D-ribulose 5-phosphate to formate and 3,4-dihydroxy-2-butanone 4-phosphate. This Buchnera aphidicola subsp. Acyrthosiphon pisum (strain 5A) protein is 3,4-dihydroxy-2-butanone 4-phosphate synthase.